The following is a 212-amino-acid chain: Ropporin-1A (212 aa).

An RIIa domain is found at 12 to 49; that stretch reads PELPKMLKEFAKAAIRVQPQDLIQWAADYFEALSRGET. S56 carries the post-translational modification Phosphoserine. Positions 209 to 212 are interaction with RHPN1; the sequence is VQLE.

The protein belongs to the ropporin family. As to quaternary structure, homodimer. Interacts with AKAP3 and RHPN1. May interact with SPA17. Interacts with FSCB; the interaction increases upon spermatozoa capacitation conditions. Interacts with CFAP61. In terms of processing, sumoylated, sumoylation decreases upon spermatozoa capacitation conditions. In terms of tissue distribution, testis specific in adult. Overexpressed in hematologic tumor cells.

The protein resides in the cell projection. Its subcellular location is the cilium. It is found in the flagellum. Its function is as follows. Important for male fertility. With ROPN1L, involved in fibrous sheath integrity and sperm motility, plays a role in PKA-dependent signaling processes required for spermatozoa capacitation. The polypeptide is Ropporin-1A (ROPN1) (Homo sapiens (Human)).